Consider the following 537-residue polypeptide: Organic anion transporter 3 (537 aa).

At 1–11 (MTFSEILDRVG) the chain is on the cytoplasmic side. Serine 4 bears the Phosphoserine mark. The chain crosses the membrane as a helical span at residues 12–32 (SMGPFQYLHVTLLALPILGIA). Residues 33–123 (NHNLLQIFTA…LVCGSNKLKE (91 aa)) lie on the Extracellular side of the membrane. Asparagine 81 is a glycosylation site (N-linked (GlcNAc...) asparagine). Residues 124 to 144 (MAQSVFMAGILVGGPVFGELS) form a helical membrane-spanning segment. At 145-150 (DRFGRK) the chain is on the cytoplasmic side. Residues 151 to 171 (PILTWSYLLLAASGSSAAFSP) form a helical membrane-spanning segment. Residues 172–176 (SLTVY) are Extracellular-facing. The helical transmembrane segment at 177-197 (MIFRFLCGCSISGISLSTIIL) threads the bilayer. At 198–212 (NVEWVPTSTRAISST) the chain is on the cytoplasmic side. Residues 213 to 233 (TIGYCYTIGQFILPGLAYAVP) traverse the membrane as a helical segment. Topologically, residues 234–236 (QWR) are extracellular. Residues 237-257 (WLQLSVSAAFFIFSLLSWWVP) form a helical membrane-spanning segment. Topologically, residues 258–327 (ESIRWLVLSG…FRVSILRRVT (70 aa)) are cytoplasmic. The helical transmembrane segment at 328–348 (FCLSLAWFATGFAYYSLAMGV) threads the bilayer. The Extracellular segment spans residues 349 to 354 (EEFGVN). A helical transmembrane segment spans residues 355-375 (IYILQIIFGGVDIPAKFITIL). Over 376–383 (SISYLGRR) the chain is Cytoplasmic. The helical transmembrane segment at 384-404 (ITQGFLLILAGVAILALIFVS) threads the bilayer. Topologically, residues 405-411 (SEMQLLR) are extracellular. Residues 412 to 432 (TALAVFGKGCLSGSFSCLFLY) form a helical membrane-spanning segment. Topologically, residues 433–471 (TSELYPTVLRQTGMGISNIWARVGSMIAPLVKITGELQP) are cytoplasmic. The chain crosses the membrane as a helical span at residues 472 to 492 (FIPNVIFGTMTLLGGSAAFFL). At 493–537 (LETLNRPLPETIEDIQDWYQQTKKTKQEPEAEKASQTIPLKTGGP) the chain is on the extracellular side. Residues 513 to 537 (QTKKTKQEPEAEKASQTIPLKTGGP) form a disordered region.

The protein belongs to the major facilitator (TC 2.A.1) superfamily. Organic cation transporter (TC 2.A.1.19) family. As to expression, expressed mainly in kidney. In kidney, detected in almost all parts of the nephron, including macula densa cells. Expressed (at protein level) throughout the renal cortex. Widely distributed in the brain with no large regional differences. Expressed in the choroid plexus (CP, located in the ventricles of the brain). Expressed in developing bone. Weakly expressed in brain and eye.

Its subcellular location is the basolateral cell membrane. The catalysed reaction is estrone 3-sulfate(out) + glutarate(in) = estrone 3-sulfate(in) + glutarate(out). It carries out the reaction estrone 3-sulfate(in) + 2-oxoglutarate(out) = estrone 3-sulfate(out) + 2-oxoglutarate(in). The enzyme catalyses taurocholate(out) + glutarate(in) = taurocholate(in) + glutarate(out). It catalyses the reaction dehydroepiandrosterone 3-sulfate(out) + glutarate(in) = dehydroepiandrosterone 3-sulfate(in) + glutarate(out). The catalysed reaction is glutarate(in) + 2-oxoglutarate(out) = glutarate(out) + 2-oxoglutarate(in). It carries out the reaction urate(in) + 2-oxoglutarate(out) = urate(out) + 2-oxoglutarate(in). The enzyme catalyses prostaglandin F2alpha(out) + glutarate(in) = prostaglandin F2alpha(in) + glutarate(out). It catalyses the reaction prostaglandin F2alpha(out) + 2-oxoglutarate(in) = prostaglandin F2alpha(in) + 2-oxoglutarate(out). The catalysed reaction is (R)-carnitine(out) + 2-oxoglutarate(in) = (R)-carnitine(in) + 2-oxoglutarate(out). It carries out the reaction glutarate(in) + (R)-carnitine(out) = glutarate(out) + (R)-carnitine(in). The enzyme catalyses prostaglandin E2(out) + 2-oxoglutarate(in) = prostaglandin E2(in) + 2-oxoglutarate(out). It catalyses the reaction prostaglandin E2(out) + glutarate(in) = prostaglandin E2(in) + glutarate(out). The catalysed reaction is urate(in) + glutarate(out) = urate(out) + glutarate(in). It carries out the reaction taurocholate(out) + 2-oxoglutarate(in) = taurocholate(in) + 2-oxoglutarate(out). The enzyme catalyses dehydroepiandrosterone 3-sulfate(out) + 2-oxoglutarate(in) = dehydroepiandrosterone 3-sulfate(in) + 2-oxoglutarate(out). It catalyses the reaction kynurenate(out) + a dicarboxylate(in) = kynurenate(in) + a dicarboxylate(out). The catalysed reaction is (indol-3-yl)acetate(out) + a dicarboxylate(in) = (indol-3-yl)acetate(in) + a dicarboxylate(out). It carries out the reaction indoxyl sulfate(out) + a dicarboxylate(in) = indoxyl sulfate(in) + a dicarboxylate(out). The enzyme catalyses N-benzoylglycine(out) + a dicarboxylate(in) = N-benzoylglycine(in) + a dicarboxylate(out). It catalyses the reaction 3-carboxy-4-methyl-5-propyl-2-furanpropanoate(out) + a dicarboxylate(in) = 3-carboxy-4-methyl-5-propyl-2-furanpropanoate(in) + a dicarboxylate(out). The catalysed reaction is (6R)-L-erythro-5,6,7,8-tetrahydrobiopterin(out) + a dicarboxylate(in) = (6R)-L-erythro-5,6,7,8-tetrahydrobiopterin(in) + a dicarboxylate(out). It carries out the reaction L-erythro-7,8-dihydrobiopterin(out) + a dicarboxylate(in) = L-erythro-7,8-dihydrobiopterin(in) + a dicarboxylate(out). The enzyme catalyses L-sepiapterin(out) + a dicarboxylate(in) = L-sepiapterin(in) + a dicarboxylate(out). Expression inhibited by androgens such as testosterone. Its function is as follows. Functions as an organic anion/dicarboxylate exchanger that couples organic anion uptake indirectly to the sodium gradient. Transports organic anions such as estrone 3-sulfate (E1S) and urate in exchange for dicarboxylates such as glutarate or ketoglutarate (2-oxoglutarate). Plays an important role in the excretion of endogenous and exogenous organic anions, especially from the kidney and the brain. E1S transport is pH- and chloride-dependent and may also involve E1S/cGMP exchange. Responsible for the transport of prostaglandin E2 (PGE2) and prostaglandin F2(alpha) (PGF2(alpha)) in the basolateral side of the renal tubule. Involved in the transport of neuroactive tryptophan metabolites kynurenate and xanthurenate. Functions as a biopterin transporters involved in the uptake and the secretion of coenzymes tetrahydrobiopterin (BH4), dihydrobiopterin (BH2) and sepiapterin to urine, thereby determining baseline levels of blood biopterins. May be involved in the basolateral transport of steviol, a metabolite of the popular sugar substitute stevioside. May participate in the detoxification/ renal excretion of drugs and xenobiotics, such as the histamine H(2)-receptor antagonists fexofenadine and cimetidine, the antibiotic benzylpenicillin (PCG), the anionic herbicide 2,4-dichloro-phenoxyacetate (2,4-D), the diagnostic agent p-aminohippurate (PAH), the antiviral acyclovir (ACV), and the mycotoxin ochratoxin (OTA), by transporting these exogenous organic anions across the cell membrane in exchange for dicarboxylates such as 2-oxoglutarate. May contribute to the release of cortisol in the adrenals. Involved in one of the detoxification systems on the choroid plexus (CP), removes substrates such as E1S or taurocholate (TC), PCG, 2,4-D and PAH, from the cerebrospinal fluid (CSF) to the blood for eventual excretion in urine and bile. Also contributes to the uptake of several other organic compounds such as the prostanoids prostaglandin E(2) and prostaglandin F(2-alpha), L-carnitine, and the therapeutic drugs allopurinol, 6-mercaptopurine (6-MP) and 5-fluorouracil (5-FU). Mediates the transport of PAH, PCG, and the statins pravastatin and pitavastatin, from the cerebrum into the blood circulation across the blood-brain barrier (BBB). Contributes to the renal uptake of potent uremic toxins (indoxyl sulfate (IS), indole acetate (IA), hippurate/N-benzoylglycine (HA) and 3-carboxy-4-methyl-5-propyl-2-furanpropionate (CMPF)), pravastatin, PCG, E1S and dehydroepiandrosterone sulfate (DHEAS), and is partly involved in the renal uptake of temocaprilat (an angiotensin-converting enzyme (ACE) inhibitor). In summary, plays a role in the efflux of drugs and xenobiotics, helping reduce their undesired toxicological effects on the body. In Mus musculus (Mouse), this protein is Organic anion transporter 3 (Slc22a8).